Consider the following 611-residue polypeptide: MMLGPKTVTRGATKGAAPRSMAARRVGGARRLSVRAAAGPAGSEKFDYVLVGGGTASCVLANKLSADGNKKVLVLEAGPTGDAMEVAVPAGITRLFAHPVMDWGMSSLTQKQLVAREIYLARGRMLGGSSGSNATLYHRGSAADYDAWGLEGWSSKDVLDWFVKAECYADGPKPYHGTGGSMNTEQPRYENVLHDEFFKAAAATGLPANPDFNDWSHPQDGFGEFQVSQKKGQRADTYRTYLKPAMARGNLKVVIGARATKVNIEKGSSGARTTGVEYAMQQFGDRFTAELAPGGEVLMCSGAVHTPHLLMLSGVGPAATLKEHGIDVVSDLSGVGQNLQDHPAAVLAARAKPEFEKLSVTSEVYDDKCNIKLGAVAQYLFQRRGPLATTGCDHGAFVRTSSSLSQPDLQMRFVPGCALDPDGVKSYIVFGELKKQGRAWPGGITLQLLAIRAKSKGSIGLKAADPFINPAININYFSDPADLATLVNAVKMARKIAAQEPLKKYLQEETFPGERASSDKDLEEYIRRTVHSGNALVGTAAMGASPAAGAVVSSADLKVFGVEGLRVVDASVLPRIPGGQTGAATVMVAERAAALLRGQATIAPSRQPVAV.

The disordered stretch occupies residues 1–22 (MMLGPKTVTRGATKGAAPRSMA). The N-terminal 36 residues, 1 to 36 (MMLGPKTVTRGATKGAAPRSMAARRVGGARRLSVRA), are a transit peptide targeting the chloroplast. Residues 55 to 56 (TA), E76, M125, S129, and 133 to 136 (NATL) each bind FAD. Residues C392, R412, Y427, and Q447 each contribute to the hexadecanoate site. Residue G582 participates in FAD binding.

Belongs to the GMC oxidoreductase family. It depends on FAD as a cofactor.

The protein resides in the plastid. It localises to the chloroplast. The enzyme catalyses a long-chain fatty acid + hnu + H(+) = a long-chain alkane + CO2. The catalysed reaction is hnu + hexadecanoate + H(+) = pentadecane + CO2. Its activity is regulated as follows. Activated by blue light and repressed by red light. Functionally, catalyzes the decarboxylation of free fatty acids to n-alkanes or n-alkenes in response to blue light. Substrate preference is toward fatty acids with C17 or C18 chains. Saturated fatty acids are converted to alkanes, not alkenes. The decarboxylation is initiated through electron abstraction from the fatty acid by the photo-excited FAD. The sequence is that of Fatty acid photodecarboxylase, chloroplastic from Chlamydomonas reinhardtii (Chlamydomonas smithii).